Reading from the N-terminus, the 181-residue chain is Translation initiation factor IF-3 (181 aa).

Belongs to the IF-3 family. As to quaternary structure, monomer.

The protein resides in the cytoplasm. Its function is as follows. IF-3 binds to the 30S ribosomal subunit and shifts the equilibrium between 70S ribosomes and their 50S and 30S subunits in favor of the free subunits, thus enhancing the availability of 30S subunits on which protein synthesis initiation begins. The polypeptide is Translation initiation factor IF-3 (Mycoplasma mycoides subsp. mycoides SC (strain CCUG 32753 / NCTC 10114 / PG1)).